The primary structure comprises 597 residues: Arginine--tRNA ligase (597 aa).

A 'HIGH' region motif is present at residues 125 to 135 (PNTNKPLHLGH).

The protein belongs to the class-I aminoacyl-tRNA synthetase family. As to quaternary structure, monomer.

Its subcellular location is the cytoplasm. The enzyme catalyses tRNA(Arg) + L-arginine + ATP = L-arginyl-tRNA(Arg) + AMP + diphosphate. The protein is Arginine--tRNA ligase of Bacteroides fragilis (strain ATCC 25285 / DSM 2151 / CCUG 4856 / JCM 11019 / LMG 10263 / NCTC 9343 / Onslow / VPI 2553 / EN-2).